Here is a 170-residue protein sequence, read N- to C-terminus: Cytochrome c-type biogenesis protein CcmE (170 aa).

The Cytoplasmic segment spans residues 1-7 (MTRKKRR). A helical; Signal-anchor for type II membrane protein membrane pass occupies residues 8-28 (LILIAACGSVLALAVGLILYA). Residues 29–170 (MSGSIVFFRS…DSTLGPRSER (142 aa)) lie on the Periplasmic side of the membrane. Residues His-122 and Tyr-126 each contribute to the heme site. Residues 132–170 (ADALKAQGRWQEGGPNRGGPAPKPATAAADSTLGPRSER) are disordered.

Belongs to the CcmE/CycJ family.

It localises to the cell inner membrane. Functionally, heme chaperone required for the biogenesis of c-type cytochromes. Transiently binds heme delivered by CcmC and transfers the heme to apo-cytochromes in a process facilitated by CcmF and CcmH. The chain is Cytochrome c-type biogenesis protein CcmE from Methylobacterium radiotolerans (strain ATCC 27329 / DSM 1819 / JCM 2831 / NBRC 15690 / NCIMB 10815 / 0-1).